Here is a 493-residue protein sequence, read N- to C-terminus: Cysteine sulfinic acid decarboxylase (493 aa).

Lysine 305 carries the N6-(pyridoxal phosphate)lysine modification.

It belongs to the group II decarboxylase family. As to quaternary structure, homodimer. Requires pyridoxal 5'-phosphate as cofactor. In terms of tissue distribution, expressed in liver and brain. Also expressed in both astrocytes and neurons, but lower levels are expressed in astrocytes.

It catalyses the reaction L-aspartate + H(+) = beta-alanine + CO2. It carries out the reaction 3-sulfino-L-alanine + H(+) = hypotaurine + CO2. The catalysed reaction is L-cysteate + H(+) = taurine + CO2. It participates in organosulfur biosynthesis; taurine biosynthesis; hypotaurine from L-cysteine: step 2/2. Functionally, catalyzes the decarboxylation of L-aspartate, 3-sulfino-L-alanine (cysteine sulfinic acid), and L-cysteate to beta-alanine, hypotaurine and taurine, respectively. The preferred substrate is 3-sulfino-L-alanine. Does not exhibit any decarboxylation activity toward glutamate. This chain is Cysteine sulfinic acid decarboxylase (CSAD), found in Homo sapiens (Human).